The primary structure comprises 532 residues: MGKRDRTEDDEVVTKKVKLDKKDKKEKKEKKDKKDKKDKKDKKDKKDKKEKKEKKEKKEKKEEVSDEEEVAEEKPKMTYTASANTIKSSGEYTQCDDLTNVSQSTIDNYFKEHTITIEGEQMRPTMEFSHVTLDPRITKVLTKFPRPTPIQAVSWPYLLAGKDMVGVAETGSGKTFTFAVPALEHVLSTSGGKGVRVLVVSPTRELAMQIYDNIKELCDVVGLHAVCVYGGVPKEQQRSDLKRASFVIATPGRLCDLIDEGSCDLSKVSYLVLDEADRMLEKGFEEDIKKIIGSTRPTGRQTVMFSATWPPEVRKLAEGFMKTPTKVMIGERDELAANKRITQSVEVLDPRAKEGRLLDLLRQYANDDFKILIFALYKKEATRVENTLTRRGYGVAAIHGDLSQQQRTKALDEFKKGEKNILLATDVAARGLDIPNVKLVINLTFPLTVEDYVHRIGRTGRAGKTGQAITLFTEHEKHLSGALINVLRGADQPVPDELLKFGGHTKKKEHGAYGAFFKDVDMTKKAKKITFD.

The tract at residues Met-1–Thr-78 is disordered. The segment covering Lys-15 to Lys-58 has biased composition (basic residues). Positions Met-126 to Ala-152 match the Q motif motif. In terms of domain architecture, Helicase ATP-binding spans Trp-155–Val-327. ATP is bound at residue Ala-168–Thr-175. Residues Asp-274 to Asp-277 carry the DEAD box motif. In terms of domain architecture, Helicase C-terminal spans Arg-356 to Gly-502.

It belongs to the DEAD box helicase family. DDX5/DBP2 subfamily.

The protein resides in the nucleus. Its subcellular location is the nucleolus. The catalysed reaction is ATP + H2O = ADP + phosphate + H(+). Its function is as follows. ATP-dependent RNA helicase required for 60S ribosomal subunit synthesis. Involved in efficient pre-rRNA processing, predominantly at site A3, which is necessary for the normal formation of 25S and 5.8S rRNAs. The sequence is that of ATP-dependent RNA helicase DBP3 (DBP3) from Yarrowia lipolytica (strain CLIB 122 / E 150) (Yeast).